We begin with the raw amino-acid sequence, 385 residues long: Isocitrate dehydrogenase [NAD] subunit beta, mitochondrial (385 aa).

The transit peptide at 1–34 (MAALSGVRWLTRALVSAGNPGAWRGLSTSAAAHA) directs the protein to the mitochondrion. An N6-acetyllysine modification is found at lysine 199.

Belongs to the isocitrate and isopropylmalate dehydrogenases family. In terms of assembly, heterooligomer of subunits alpha (IDH3A), beta (IDH3B), and gamma (IDH3G) in the apparent ratio of 2:1:1. The heterodimer containing one IDH3A and one IDH3B subunit and the heterodimer containing one IDH3A and one IDH3G subunit assemble into a heterotetramer (which contains two subunits of IDH3A, one of IDH3B and one of IDH3G) and further into the heterooctamer.

The protein localises to the mitochondrion. Its activity is regulated as follows. The heterotetramer and the heterodimer composed of IDH3A and IDH3G subunits can be allosterically activated by citrate (CIT) or/and ADP, and the two activators can act independently or synergistically. The heterodimer composed of IDH3A and IDH3B subunits cannot be allosterically regulated and the allosteric regulation of the heterotetramer is through the IDH3G subunit and not the IDH3B subunit. The IDH3G subunit contains the allosteric site which consists of a CIT-binding site and an ADP-binding site, and the binding of CIT and ADP causes conformational changes at the allosteric site which are transmitted to the active site in the catalytic subunit (IDH3A) through a cascade of conformational changes at the heterodimer interface, leading to stabilization of the isocitrate-binding at the active site and thus activation of the enzyme. ATP can activate the heterotetramer and the heterodimer composed of IDH3A and IDH3G subunits at low concentrations but inhibits their activities at high concentrations, whereas ATP exhibits only inhibitory effect on the heterodimer composed of IDH3A and IDH3B subunits. Functionally, plays a structural role to facilitate the assembly and ensure the full activity of the enzyme catalyzing the decarboxylation of isocitrate (ICT) into alpha-ketoglutarate. The heterodimer composed of the alpha (IDH3A) and beta (IDH3B) subunits and the heterodimer composed of the alpha (IDH3A) and gamma (IDH3G) subunits, have considerable basal activity but the full activity of the heterotetramer (containing two subunits of IDH3A, one of IDH3B and one of IDH3G) requires the assembly and cooperative function of both heterodimers. In Homo sapiens (Human), this protein is Isocitrate dehydrogenase [NAD] subunit beta, mitochondrial (IDH3B).